A 307-amino-acid polypeptide reads, in one-letter code: N-acetylmuramic acid 6-phosphate etherase 2 (307 aa).

Residues 62–225 (ITAAFKQGGR…TTASMIRLGK (164 aa)) form the SIS domain. Glu-90 acts as the Proton donor in catalysis. Glu-121 is an active-site residue.

This sequence belongs to the GCKR-like family. MurNAc-6-P etherase subfamily. As to quaternary structure, homodimer.

The catalysed reaction is N-acetyl-D-muramate 6-phosphate + H2O = N-acetyl-D-glucosamine 6-phosphate + (R)-lactate. Its pathway is amino-sugar metabolism; 1,6-anhydro-N-acetylmuramate degradation. It participates in amino-sugar metabolism; N-acetylmuramate degradation. The protein operates within cell wall biogenesis; peptidoglycan recycling. Specifically catalyzes the cleavage of the D-lactyl ether substituent of MurNAc 6-phosphate, producing GlcNAc 6-phosphate and D-lactate. Together with AnmK, is also required for the utilization of anhydro-N-acetylmuramic acid (anhMurNAc) either imported from the medium or derived from its own cell wall murein, and thus plays a role in cell wall recycling. This Vibrio cholerae serotype O1 (strain ATCC 39315 / El Tor Inaba N16961) protein is N-acetylmuramic acid 6-phosphate etherase 2.